Consider the following 98-residue polypeptide: NADH-ubiquinone oxidoreductase chain 4L (98 aa).

3 consecutive transmembrane segments (helical) span residues 2-22, 29-49, and 61-81; these read PSIS…MLVF, SLLC…LFIM, and ILLL…LVMV.

The protein belongs to the complex I subunit 4L family. In terms of assembly, core subunit of respiratory chain NADH dehydrogenase (Complex I) which is composed of 45 different subunits.

Its subcellular location is the mitochondrion inner membrane. It carries out the reaction a ubiquinone + NADH + 5 H(+)(in) = a ubiquinol + NAD(+) + 4 H(+)(out). Functionally, core subunit of the mitochondrial membrane respiratory chain NADH dehydrogenase (Complex I) which catalyzes electron transfer from NADH through the respiratory chain, using ubiquinone as an electron acceptor. Part of the enzyme membrane arm which is embedded in the lipid bilayer and involved in proton translocation. The protein is NADH-ubiquinone oxidoreductase chain 4L (MT-ND4L) of Lepilemur sahamalazensis (Sahamalaza sportive lemur).